The following is a 476-amino-acid chain: tRNA sulfurtransferase (476 aa).

The 103-residue stretch at 54 to 156 folds into the THUMP domain; that stretch reads AENDIPLSKV…GKDALIYDKI (103 aa). Residues 174-175, Lys-256, Gly-278, and Gln-287 contribute to the ATP site; that span reads MV. Cys-334 and Cys-433 form a disulfide bridge. Positions 388–470 constitute a Rhodanese domain; sequence NLEDAVFIDL…LSKQKGSVDE (83 aa). Cys-433 (cysteine persulfide intermediate) is an active-site residue.

This sequence belongs to the ThiI family.

The protein localises to the cytoplasm. The catalysed reaction is [ThiI sulfur-carrier protein]-S-sulfanyl-L-cysteine + a uridine in tRNA + 2 reduced [2Fe-2S]-[ferredoxin] + ATP + H(+) = [ThiI sulfur-carrier protein]-L-cysteine + a 4-thiouridine in tRNA + 2 oxidized [2Fe-2S]-[ferredoxin] + AMP + diphosphate. The enzyme catalyses [ThiS sulfur-carrier protein]-C-terminal Gly-Gly-AMP + S-sulfanyl-L-cysteinyl-[cysteine desulfurase] + AH2 = [ThiS sulfur-carrier protein]-C-terminal-Gly-aminoethanethioate + L-cysteinyl-[cysteine desulfurase] + A + AMP + 2 H(+). It functions in the pathway cofactor biosynthesis; thiamine diphosphate biosynthesis. Its function is as follows. Catalyzes the ATP-dependent transfer of a sulfur to tRNA to produce 4-thiouridine in position 8 of tRNAs, which functions as a near-UV photosensor. Also catalyzes the transfer of sulfur to the sulfur carrier protein ThiS, forming ThiS-thiocarboxylate. This is a step in the synthesis of thiazole, in the thiamine biosynthesis pathway. The sulfur is donated as persulfide by IscS. The polypeptide is tRNA sulfurtransferase (Thermoplasma volcanium (strain ATCC 51530 / DSM 4299 / JCM 9571 / NBRC 15438 / GSS1)).